We begin with the raw amino-acid sequence, 940 residues long: Fibronectin-binding protein B (940 aa).

The signal sequence occupies residues 1-36 (MKSNLRYGIRKHKLGAASVFLGTMIVVGMGQEKEAA). Residues 36 to 111 (AASEQNNTTV…PKVETSRVDL (76 aa)) are disordered. The segment covering 38–92 (SEQNNTTVEESGSSATESKASETQTTTNNVNTIDETQSYSATSTEQPSQSTQVTT) has biased composition (polar residues). The segment at 162–480 (TGTDVTNKVE…AQGDGKDKLK (319 aa)) is fibrinogen/elastin/tropoelastin-binding. Disordered stretches follow at residues 676–746 (LGYE…NIID), 764–878 (IIEE…GKVV), and 892–918 (VPTK…NGML). The D-1 repeat unit spans residues 681–718 (GQNSGNQSFEEDTEEDKPKYEQGGNIVDIDFDSVPQIH). The D-2 repeat unit spans residues 719–756 (GQNNGNQSFEEDTEKDKPKYEQGGNIIDIDFDSVPHIH). One copy of the D-3 repeat lies at 757–795 (GFNKHTEIIEEDTNKDKPNYQFGGHNSVDFEEDTLPQVS). A compositionally biased stretch (basic and acidic residues) spans 764–774 (IIEEDTNKDKP). Positions 792–802 (PQVSGHNEGQQ) are enriched in polar residues. The stretch at 796–814 (GHNEGQQTIEEDTTPPIVP) is one D-4; truncated repeat. A compositionally biased stretch (pro residues) spans 811-860 (PIVPPTPPTPEVPSEPETPTPPTPEVPSEPETPTPPTPEVPTEPGKPIPP). 3 WR repeats span residues 815–828 (PTPP…EPET), 829–842 (PTPP…EPET), and 857–870 (PIPP…KPSK). The short motif at 904–908 (LPETG) is the LPXTG sorting signal element. Thr-907 carries the post-translational modification Pentaglycyl murein peptidoglycan amidated threonine. A propeptide spans 908–940 (GGEESTNNGMLFGGLFSILGLALLRRNKKNHKA) (removed by sortase).

Interacts with host PLG; this interaction provides active plasmin on the surface of bacteria cells. Interacts with host histones.

Its subcellular location is the secreted. It localises to the cell wall. Functionally, multifunctional protein which promotes bacterial attachment to fibrinogen, elastin and fibronectin. Also promotes the accumulation phase and the primary attachment phase of biofilm formation. In addition, protects against the antimicrobial activity of histones. Mechanistically, captures histones and prevents them from reaching the bacterial membrane and simultaneously binds plasminogen, thereby promoting its conversion to plasmin to destroy the bound histones. This is Fibronectin-binding protein B from Staphylococcus aureus (strain USA300).